The chain runs to 70 residues: Protein FlmC (70 aa).

Its function is as follows. Component of a type I toxin-antitoxin (TA) system. Either this protein or sequences upstream of it are required for translation of downstream flmA; this could be translationally coupled to flmA. The polypeptide is Protein FlmC (flmC) (Escherichia coli (strain K12)).